The primary structure comprises 555 residues: AP2-like ethylene-responsive transcription factor ANT (555 aa).

Disordered regions lie at residues 34–56 (GGRE…SVPP) and 199–231 (LSMS…NHQQ). 3 stretches are compositionally biased toward low complexity: residues 41 to 53 (SSST…SSSS), 199 to 208 (LSMSPGSQSS), and 218 to 231 (QNQN…NHQQ). 2 consecutive DNA-binding regions (AP2/ERF) follow at residues 283-349 (QYRG…TNFS) and 385-443 (IYRG…TNFD).

The protein belongs to the AP2/ERF transcription factor family. AP2 subfamily. As to quaternary structure, interacts with ANL2, HDG2 and HDG10, and possibly with GL2, HDG3, HDG8, ATML1 and PDF2. As to expression, mostly expressed in developing flowers. Also present in mature flowers, siliques and seedlings, but not in mature roots, leaves and stems. Expressed in ovules and in vegetative and floral primordia.

The protein localises to the nucleus. Functionally, transcription activator that recognizes and binds to the DNA consensus sequence 5'-CAC[AG]N[AT]TNCCNANG-3'. Required for the initiation and growth of ovules integumenta, and for the development of female gametophyte. Plays a critical role in the development of gynoecium marginal tissues (e.g. stigma, style and septa), and in the fusion of carpels and of medial ridges leading to ovule primordia. Also involved in organs initiation and development, including floral organs. Maintains the meristematic competence of cells and consequently sustains expression of cell cycle regulators during organogenesis, thus controlling the final size of each organ by controlling their cell number. Regulates INO autoinduction and expression pattern. As ANT promotes petal cell identity and mediates down-regulation of AG in flower whorl 2, it functions as a class A homeotic gene. The protein is AP2-like ethylene-responsive transcription factor ANT of Arabidopsis thaliana (Mouse-ear cress).